The sequence spans 274 residues: tRNA (mnm(5)s(2)U34)-methyltransferase, chloroplastic (274 aa).

Residues 1–50 constitute a chloroplast transit peptide; it reads MAAGFFQAEMSILSSTLARSYSLPIRKTLMTFDFRIAMQRNPCLRIRRSC. Asn-108, Asn-110, Asp-134, Gln-136, and His-166 together coordinate S-adenosyl-L-methionine.

This sequence belongs to the methyltransferase superfamily. MnmM family.

Its subcellular location is the plastid. The protein localises to the chloroplast. The catalysed reaction is 5-aminomethyl-2-thiouridine(34) in tRNA + S-adenosyl-L-methionine = 5-methylaminomethyl-2-thiouridine(34) in tRNA + S-adenosyl-L-homocysteine + H(+). It participates in tRNA modification. Its function is as follows. Involved in the biosynthesis of 5-methylaminomethyl-2-thiouridine (mnm(5)s(2)U) at the wobble position (U34) in tRNA. Catalyzes the transfer of a methyl group from S-adenosyl-L-methionine to nm(5)s(2)U34 to form mnm(5)s(2)U34. In Arabidopsis thaliana (Mouse-ear cress), this protein is tRNA (mnm(5)s(2)U34)-methyltransferase, chloroplastic.